The following is a 472-amino-acid chain: Alanine--anticapsin ligase (472 aa).

Glu-109 serves as a coordination point for Mg(2+). Residues Lys-138 and Lys-178 each contribute to the ATP site. The region spanning 142–355 (RAAFNRAGVK…MAQLLLDVLC (214 aa)) is the ATP-grasp domain. Mg(2+) is bound at residue Leu-182. Residues 184–185 (SS), 226–229 (EEFL), and Gln-268 contribute to the ATP site. Substrate-binding positions include Glu-273 and 309–311 (HTE). Mg(2+)-binding residues include Glu-311 and Glu-324. Position 328-331 (328-331 (RFAG)) interacts with substrate.

In terms of assembly, monomer or homodimer. Mg(2+) is required as a cofactor.

The catalysed reaction is L-anticapsin + L-alanine + ATP = bacilysin + ADP + phosphate + H(+). It functions in the pathway antibiotic biosynthesis; bacilysin biosynthesis. Its function is as follows. Part of the bacABCDEFG operon responsible for the biosynthesis of bacilysin, an irreversible inactivator of the glutaminase domain of glucosamine synthetase. Catalyzes the formation of alpha-dipeptides from various L-amino acids in the presence of ATP. In vivo catalyzes the ligation of L-alanine and L-anticapsin (epoxycyclohexanonyl-Ala) to produce the final bacilysin antibiotic (L-Ala-L-4S-cyclohexenonyl-Ala dipeptide). The protein is Alanine--anticapsin ligase of Bacillus amyloliquefaciens (Bacillus velezensis).